The sequence spans 79 residues: Exodeoxyribonuclease 7 small subunit (79 aa).

The protein belongs to the XseB family. In terms of assembly, heterooligomer composed of large and small subunits.

It localises to the cytoplasm. The enzyme catalyses Exonucleolytic cleavage in either 5'- to 3'- or 3'- to 5'-direction to yield nucleoside 5'-phosphates.. Functionally, bidirectionally degrades single-stranded DNA into large acid-insoluble oligonucleotides, which are then degraded further into small acid-soluble oligonucleotides. The polypeptide is Exodeoxyribonuclease 7 small subunit (Geobacillus kaustophilus (strain HTA426)).